The chain runs to 96 residues: Small ribosomal subunit protein bS20 (96 aa).

The protein belongs to the bacterial ribosomal protein bS20 family.

Its function is as follows. Binds directly to 16S ribosomal RNA. The sequence is that of Small ribosomal subunit protein bS20 from Anaplasma phagocytophilum (strain HZ).